The primary structure comprises 464 residues: Soluble pyridine nucleotide transhydrogenase (464 aa).

35–44 (DSRRQVGGNC) is a binding site for FAD.

The protein belongs to the class-I pyridine nucleotide-disulfide oxidoreductase family. The cofactor is FAD.

The protein resides in the cytoplasm. The catalysed reaction is NAD(+) + NADPH = NADH + NADP(+). Conversion of NADPH, generated by peripheral catabolic pathways, to NADH, which can enter the respiratory chain for energy generation. This Pseudomonas entomophila (strain L48) protein is Soluble pyridine nucleotide transhydrogenase.